A 233-amino-acid polypeptide reads, in one-letter code: MQDSKEQRVHGVFEKIYKNYDQMNSVISFQQHKKWRDKTMRIMNVKEGAKALDVCCGTADWTIALAKAAGKSGEIKGLDFSENMLSVGEQKVKDGGFSQIELLHGNAMELPFDDDTFDYVTIGFGLRNVPDYLTVLKEMRRVVKPGGQVVCLETSQPEMFGFRQAYFMYFKYIMPFFGKLFAKSYKEYSWLQESARDFPGMKELAGLFEEAGLKNVKYHSFTGGVAATHIGWK.

S-adenosyl-L-methionine contacts are provided by residues T58, D79, and 106–107; that span reads NA.

It belongs to the class I-like SAM-binding methyltransferase superfamily. MenG/UbiE family.

It carries out the reaction a 2-demethylmenaquinol + S-adenosyl-L-methionine = a menaquinol + S-adenosyl-L-homocysteine + H(+). The protein operates within quinol/quinone metabolism; menaquinone biosynthesis; menaquinol from 1,4-dihydroxy-2-naphthoate: step 2/2. Methyltransferase required for the conversion of demethylmenaquinol (DMKH2) to menaquinol (MKH2). The polypeptide is Demethylmenaquinone methyltransferase (Bacillus subtilis (strain 168)).